The chain runs to 485 residues: Glutamyl-tRNA(Gln) amidotransferase subunit A (485 aa).

Residues lysine 76 and serine 155 each act as charge relay system in the active site. Residue serine 179 is the Acyl-ester intermediate of the active site.

It belongs to the amidase family. GatA subfamily. In terms of assembly, heterotrimer of A, B and C subunits.

The enzyme catalyses L-glutamyl-tRNA(Gln) + L-glutamine + ATP + H2O = L-glutaminyl-tRNA(Gln) + L-glutamate + ADP + phosphate + H(+). Its function is as follows. Allows the formation of correctly charged Gln-tRNA(Gln) through the transamidation of misacylated Glu-tRNA(Gln) in organisms which lack glutaminyl-tRNA synthetase. The reaction takes place in the presence of glutamine and ATP through an activated gamma-phospho-Glu-tRNA(Gln). The chain is Glutamyl-tRNA(Gln) amidotransferase subunit A from Marinobacter nauticus (strain ATCC 700491 / DSM 11845 / VT8) (Marinobacter aquaeolei).